A 274-amino-acid chain; its full sequence is Putative ABC transporter ATP-binding protein alr3946 (274 aa).

In terms of domain architecture, ABC transporter spans 6 to 242 (LTFEQVYYTY…REILDSIELG (237 aa)). An ATP-binding site is contributed by 40–47 (GRNGCGKT).

This sequence belongs to the ABC transporter superfamily.

It localises to the cell inner membrane. Its function is as follows. Probably part of an ABC transporter complex. Responsible for energy coupling to the transport system. This is Putative ABC transporter ATP-binding protein alr3946 from Nostoc sp. (strain PCC 7120 / SAG 25.82 / UTEX 2576).